A 41-amino-acid polypeptide reads, in one-letter code: MKVLSSLKSAKSRHPDCQIVRRRGKLFVICKSNPRFKARQR.

This sequence belongs to the bacterial ribosomal protein bL36 family.

In Aeromonas salmonicida (strain A449), this protein is Large ribosomal subunit protein bL36A.